The primary structure comprises 561 residues: Zinc finger protein with KRAB and SCAN domains 1 (561 aa).

Positions 1 to 51 (MMTAESRETTGLSPQAAQEKDGIVIVKVEEEDEEDHMWGQDSSLQETPPPD) are disordered. Phosphoserine is present on S13. A Glycyl lysine isopeptide (Lys-Gly) (interchain with G-Cter in SUMO2) cross-link involves residue K27. Residues 56 to 138 (RQRFRRFCYQ…TLLEDLELDL (83 aa)) form the SCAN box domain. Positions 163-187 (VQESSSFDHHETAQSHFKHSSRKPR) are disordered. Residues 178 to 187 (HFKHSSRKPR) are compositionally biased toward basic residues. Residues K180 and K226 each participate in a glycyl lysine isopeptide (Lys-Gly) (interchain with G-Cter in SUMO2) cross-link. In terms of domain architecture, KRAB spans 225–304 (VKIEDMAVSL…QKEFGEKREQ (80 aa)). A compositionally biased stretch (polar residues) spans 260–275 (NVFSQGSENRNGNEST). Positions 260 to 372 (NVFSQGSENR…NTPEEAPSGA (113 aa)) are disordered. 2 stretches are compositionally biased toward basic and acidic residues: residues 276–286 (SKAEVKEDSTS) and 294–349 (FQKE…EKGK). Glycyl lysine isopeptide (Lys-Gly) (interchain with G-Cter in SUMO2) cross-links involve residues K277, K296, K301, and K336. A compositionally biased stretch (polar residues) spans 355 to 365 (FSLSANFNNTP). K373 participates in a covalent cross-link: Glycyl lysine isopeptide (Lys-Gly) (interchain with G-Cter in SUMO2). 6 consecutive C2H2-type zinc fingers follow at residues 375–397 (HRCD…KIIH), 403–425 (YECN…QRIH), 431–453 (HECN…QRIH), 459–481 (YECN…QRIH), 487–509 (YECS…RRIH), and 515–537 (YKCT…HRIH). Residues K410, K438, and K476 each participate in a glycyl lysine isopeptide (Lys-Gly) (interchain with G-Cter in SUMO2) cross-link. Residue K558 forms a Glycyl lysine isopeptide (Lys-Gly) (interchain with G-Cter in SUMO2) linkage.

Belongs to the krueppel C2H2-type zinc-finger protein family.

Its subcellular location is the nucleus. May be involved in transcriptional regulation. This chain is Zinc finger protein with KRAB and SCAN domains 1 (Zkscan1), found in Mus musculus (Mouse).